The following is a 131-amino-acid chain: Small ribosomal subunit protein uS8 (131 aa).

The protein belongs to the universal ribosomal protein uS8 family. As to quaternary structure, part of the 30S ribosomal subunit. Contacts proteins S5 and S12.

Functionally, one of the primary rRNA binding proteins, it binds directly to 16S rRNA central domain where it helps coordinate assembly of the platform of the 30S subunit. This chain is Small ribosomal subunit protein uS8, found in Hamiltonella defensa subsp. Acyrthosiphon pisum (strain 5AT).